A 220-amino-acid polypeptide reads, in one-letter code: Riboflavin kinase (220 aa).

The tract at residues 1-92 (MDTSDQYYRA…LSRILSIKSN (92 aa)) is H-T-H motif-like. The tract at residues 93-220 (IVMTGIVVPG…GDEVTIEVTA (128 aa)) is riboflavin kinase. 102–107 (GMGEGK) serves as a coordination point for CDP. Residues T131 and N133 each coordinate Mg(2+). The FMN site is built by T188 and E195. CDP is bound at residue 200–203 (KYLR).

The protein belongs to the archaeal riboflavin kinase family. Mg(2+) serves as cofactor.

The catalysed reaction is riboflavin + CTP = CDP + FMN + H(+). It participates in cofactor biosynthesis; FMN biosynthesis; FMN from riboflavin (CTP route): step 1/1. Catalyzes the CTP-dependent phosphorylation of riboflavin (vitamin B2) to form flavin mononucleotide (FMN). The protein is Riboflavin kinase (ribK) of Thermoplasma volcanium (strain ATCC 51530 / DSM 4299 / JCM 9571 / NBRC 15438 / GSS1).